We begin with the raw amino-acid sequence, 431 residues long: Tol-Pal system protein TolB (431 aa).

The signal sequence occupies residues 1-26; that stretch reads MSLMTKLGFRALVASCLITAGSAANA. Residues 406 to 431 are disordered; the sequence is DGSAPPQILSVQGGSVREPSWGPFMQ.

The protein belongs to the TolB family. The Tol-Pal system is composed of five core proteins: the inner membrane proteins TolA, TolQ and TolR, the periplasmic protein TolB and the outer membrane protein Pal. They form a network linking the inner and outer membranes and the peptidoglycan layer.

It is found in the periplasm. Functionally, part of the Tol-Pal system, which plays a role in outer membrane invagination during cell division and is important for maintaining outer membrane integrity. The sequence is that of Tol-Pal system protein TolB from Burkholderia orbicola (strain MC0-3).